A 278-amino-acid chain; its full sequence is NADPH-dependent 7-cyano-7-deazaguanine reductase (278 aa).

Substrate is bound at residue 87 to 89 (IES). An NADPH-binding site is contributed by 89–90 (SK). Cys-185 acts as the Thioimide intermediate in catalysis. Catalysis depends on Asp-192, which acts as the Proton donor. 224 to 225 (HE) provides a ligand contact to substrate. 253 to 254 (RG) is a binding site for NADPH. The disordered stretch occupies residues 255-278 (GLDINPYRSTNPTFSVQNHRSFRQ). Residues 261–278 (YRSTNPTFSVQNHRSFRQ) are compositionally biased toward polar residues.

It belongs to the GTP cyclohydrolase I family. QueF type 2 subfamily. Homodimer.

The protein resides in the cytoplasm. It carries out the reaction 7-aminomethyl-7-carbaguanine + 2 NADP(+) = 7-cyano-7-deazaguanine + 2 NADPH + 3 H(+). The protein operates within tRNA modification; tRNA-queuosine biosynthesis. Functionally, catalyzes the NADPH-dependent reduction of 7-cyano-7-deazaguanine (preQ0) to 7-aminomethyl-7-deazaguanine (preQ1). This Coxiella burnetii (strain CbuK_Q154) (Coxiella burnetii (strain Q154)) protein is NADPH-dependent 7-cyano-7-deazaguanine reductase.